A 1004-amino-acid polypeptide reads, in one-letter code: UPF0182 protein Noca_1530 (1004 aa).

The disordered stretch occupies residues 1 to 20 (MSELFDEAPRDPGPPARSGS). 7 helical membrane-spanning segments follow: residues 26 to 46 (LIVT…FAGI), 71 to 91 (VLFF…IYLA), 120 to 140 (TWLL…SAIG), 183 to 203 (MAVL…YGGI), 212 to 232 (LSGA…LAKA), 261 to 281 (VLPA…LFFV), and 293 to 313 (VGLA…PGIV). Disordered regions lie at residues 899-924 (GVST…PPAT) and 974-1004 (LGQK…SPSS). Composition is skewed to low complexity over residues 903-916 (GPGT…QPGD) and 979-1004 (GSAG…SPSS).

Belongs to the UPF0182 family.

It is found in the cell membrane. In Nocardioides sp. (strain ATCC BAA-499 / JS614), this protein is UPF0182 protein Noca_1530.